Reading from the N-terminus, the 275-residue chain is Dermonecrotic toxin SpeSicTox-betaIIA2v (275 aa).

The active site involves His5. Mg(2+) is bound by residues Glu25 and Asp27. Residue His41 is the Nucleophile of the active site. Cystine bridges form between Cys45-Cys51 and Cys47-Cys190. A Mg(2+)-binding site is contributed by Asp85.

Belongs to the arthropod phospholipase D family. Class II subfamily. Requires Mg(2+) as cofactor. Expressed by the venom gland.

It localises to the secreted. The enzyme catalyses an N-(acyl)-sphingosylphosphocholine = an N-(acyl)-sphingosyl-1,3-cyclic phosphate + choline. The catalysed reaction is an N-(acyl)-sphingosylphosphoethanolamine = an N-(acyl)-sphingosyl-1,3-cyclic phosphate + ethanolamine. It catalyses the reaction a 1-acyl-sn-glycero-3-phosphocholine = a 1-acyl-sn-glycero-2,3-cyclic phosphate + choline. It carries out the reaction a 1-acyl-sn-glycero-3-phosphoethanolamine = a 1-acyl-sn-glycero-2,3-cyclic phosphate + ethanolamine. Functionally, dermonecrotic toxins cleave the phosphodiester linkage between the phosphate and headgroup of certain phospholipids (sphingolipid and lysolipid substrates), forming an alcohol (often choline) and a cyclic phosphate. This toxin acts on sphingomyelin (SM). It may also act on ceramide phosphoethanolamine (CPE), lysophosphatidylcholine (LPC) and lysophosphatidylethanolamine (LPE), but not on lysophosphatidylserine (LPS), and lysophosphatidylglycerol (LPG). It acts by transphosphatidylation, releasing exclusively cyclic phosphate products as second products. Induces dermonecrosis, hemolysis, increased vascular permeability, edema, inflammatory response, and platelet aggregation. The chain is Dermonecrotic toxin SpeSicTox-betaIIA2v from Sicarius peruensis (Six-eyed sand spider).